A 420-amino-acid chain; its full sequence is Calreticulin (420 aa).

A signal peptide spans 1–18 (MKWGVVAVLATLVVAASA). Cysteine 106 and cysteine 140 form a disulfide bridge. An alpha-D-glucoside-binding residues include tyrosine 110, lysine 112, tyrosine 131, and aspartate 138. 7 repeat units span residues 194–205 (VASGSLYEDWDM), 213–224 (DPKASKPEDWDE), 230–241 (DPEDKKPEGWDD), 248–259 (DKDAKKPEDWDD), 263–273 (GTWEPPMIPNP), 277–287 (GEWKAKMIKNP), and 291–301 (GIWVAPDIDNP). The segment at 194–259 (VASGSLYEDW…DAKKPEDWDD (66 aa)) is 4 X approximate repeats. Positions 210 to 220 (TIKDPKASKPE) are enriched in basic and acidic residues. Positions 210–272 (TIKDPKASKP…GTWEPPMIPN (63 aa)) are disordered. Residues 221–230 (DWDEREEIAD) show a composition bias toward acidic residues. The interval 263 to 301 (GTWEPPMIPNPEYKGEWKAKMIKNPAYKGIWVAPDIDNP) is 3 X approximate repeats. Glutamate 321 provides a ligand contact to an alpha-D-glucoside. Residues 357–376 (EEKAMFDKVKKEEDEKKAKD) are compositionally biased toward basic and acidic residues. The segment at 357 to 420 (EEKAMFDKVK…EEEESGHDEL (64 aa)) is disordered. 2 stretches are compositionally biased toward acidic residues: residues 385–398 (EAAE…EDKE) and 411–420 (EEEESGHDEL). Positions 417 to 420 (HDEL) match the Prevents secretion from ER motif.

It belongs to the calreticulin family.

The protein resides in the endoplasmic reticulum lumen. Functionally, molecular calcium-binding chaperone promoting folding, oligomeric assembly and quality control in the ER via the calreticulin/calnexin cycle. This lectin may interact transiently with almost all of the monoglucosylated glycoproteins that are synthesized in the ER. In Chlamydomonas reinhardtii (Chlamydomonas smithii), this protein is Calreticulin.